A 383-amino-acid polypeptide reads, in one-letter code: GTP-binding protein 10 (383 aa).

The region spanning 13–148 (GNFIDNLRIY…RIIHLDLKLI (136 aa)) is the Obg domain. The OBG-type G domain occupies 149-344 (SDVGLVGFPN…LIGCIRKTMD (196 aa)). GTP is bound by residues 155-162 (GFPNAGKS), 202-206 (DLPGL), and 278-281 (NKMD). Residues 362-383 (LQKETSRTVKRNLKNSPQRTHH) are disordered. Over residues 369 to 383 (TVKRNLKNSPQRTHH) the composition is skewed to basic residues.

This sequence belongs to the TRAFAC class OBG-HflX-like GTPase superfamily. OBG GTPase family.

The protein resides in the nucleus. The protein localises to the nucleolus. Functionally, may be involved in the ribosome maturation process. The protein is GTP-binding protein 10 (gtpbp10) of Xenopus tropicalis (Western clawed frog).